Reading from the N-terminus, the 255-residue chain is Geranylgeranylglyceryl phosphate synthase (255 aa).

2 residues coordinate Mg(2+): aspartate 25 and serine 54. Sn-glycerol 1-phosphate-binding positions include 173–179 (YLEGGSG), 203–204 (GG), and 225–226 (GT).

It belongs to the GGGP/HepGP synthase family. Group II subfamily. Mg(2+) serves as cofactor.

The protein resides in the cytoplasm. It catalyses the reaction sn-glycerol 1-phosphate + (2E,6E,10E)-geranylgeranyl diphosphate = sn-3-O-(geranylgeranyl)glycerol 1-phosphate + diphosphate. It participates in membrane lipid metabolism; glycerophospholipid metabolism. Prenyltransferase that catalyzes the transfer of the geranylgeranyl moiety of geranylgeranyl diphosphate (GGPP) to the C3 hydroxyl of sn-glycerol-1-phosphate (G1P). This reaction is the first ether-bond-formation step in the biosynthesis of archaeal membrane lipids. This is Geranylgeranylglyceryl phosphate synthase from Thermofilum pendens (strain DSM 2475 / Hrk 5).